The chain runs to 469 residues: Asparagine--tRNA ligase (469 aa).

It belongs to the class-II aminoacyl-tRNA synthetase family. As to quaternary structure, homodimer.

It localises to the cytoplasm. It catalyses the reaction tRNA(Asn) + L-asparagine + ATP = L-asparaginyl-tRNA(Asn) + AMP + diphosphate + H(+). This chain is Asparagine--tRNA ligase, found in Porphyromonas gingivalis (strain ATCC BAA-308 / W83).